The sequence spans 111 residues: HTH-type transcriptional regulator SinR (111 aa).

An HTH cro/C1-type domain is found at 6–61 (IKQYRKEKGYSLSELAEKAGVAKSYLSSIERNLQTNPSIQFLEKVSAVLDVSVHTL). A DNA-binding region (H-T-H motif) is located at residues 17-36 (LSELAEKAGVAKSYLSSIER). Residues 65–103 (KDETEYDGQLDSEWENLVRDAMASGVSKKQFREFLDYQK) enclose the Sin domain.

Homotetramer. Also associates with SinI.

Affects autolysin level and flagellation. The polypeptide is HTH-type transcriptional regulator SinR (sinR) (Bacillus licheniformis).